A 177-amino-acid polypeptide reads, in one-letter code: Ribosome rescue factor SmrB (177 aa).

In terms of domain architecture, Smr spans leucine 98 to serine 173.

This sequence belongs to the SmrB family. As to quaternary structure, associates with collided ribosomes, but not with correctly translating polysomes.

Functionally, acts as a ribosome collision sensor. Detects stalled/collided disomes (pairs of ribosomes where the leading ribosome is stalled and a second ribosome has collided with it) and endonucleolytically cleaves mRNA at the 5' boundary of the stalled ribosome. Stalled/collided disomes form a new interface (primarily via the 30S subunits) that binds SmrB. Cleaved mRNA becomes available for tmRNA ligation, leading to ribosomal subunit dissociation and rescue of stalled ribosomes. The protein is Ribosome rescue factor SmrB of Aliivibrio fischeri (strain ATCC 700601 / ES114) (Vibrio fischeri).